A 647-amino-acid polypeptide reads, in one-letter code: Nucleoside triphosphatase I (647 aa).

Residues 48–212 (FIGLKNLNSM…NNLIGLLRPN (165 aa)) form the Helicase ATP-binding domain. ATP is bound at residue 61–68 (WDTGTGKT). The short motif at 150 to 153 (DEVH) is the DEXH box element. The 164-residue stretch at 378–541 (YIEACRIILN…KINVVFDLLK (164 aa)) folds into the Helicase C-terminal domain. The interval 467–533 (DIIILDMPWN…DIIKNKQGKI (67 aa)) is binding to the cap-specific mRNA (nucleoside-2'-O-)-methyltransferase.

Belongs to the helicase family. NPH I subfamily. As to quaternary structure, monomer. Interacts (via C-terminus) with RAP94 (via N-terminus). Interacts with the cap-specific mRNA (nucleoside-2'-O-)-methyltransferase.

The protein resides in the virion. It catalyses the reaction a ribonucleoside 5'-triphosphate + H2O = a ribonucleoside 5'-diphosphate + phosphate + H(+). Functionally, DNA-dependent ATPase required for providing the needed energy to achieve the termination of early transcripts. Acts in concert with the RAP94 subunit of the virion RNA polymerase and the capping enzyme/VTF to catalyze release of UUUUUNU-containing nascent RNA from the elongation complex. NPH-I must bind ssDNA in order to exhibit ATPase activity. The sequence is that of Nucleoside triphosphatase I (NPH1) from Choristoneura fumiferana (Spruce budworm moth).